Here is a 266-residue protein sequence, read N- to C-terminus: Thiazole synthase (266 aa).

The active-site Schiff-base intermediate with DXP is the lysine 95. 1-deoxy-D-xylulose 5-phosphate is bound by residues glycine 156, 182-183 (AG), and 204-205 (NT).

The protein belongs to the ThiG family. In terms of assembly, homotetramer. Forms heterodimers with either ThiH or ThiS.

It is found in the cytoplasm. It catalyses the reaction [ThiS sulfur-carrier protein]-C-terminal-Gly-aminoethanethioate + 2-iminoacetate + 1-deoxy-D-xylulose 5-phosphate = [ThiS sulfur-carrier protein]-C-terminal Gly-Gly + 2-[(2R,5Z)-2-carboxy-4-methylthiazol-5(2H)-ylidene]ethyl phosphate + 2 H2O + H(+). It participates in cofactor biosynthesis; thiamine diphosphate biosynthesis. In terms of biological role, catalyzes the rearrangement of 1-deoxy-D-xylulose 5-phosphate (DXP) to produce the thiazole phosphate moiety of thiamine. Sulfur is provided by the thiocarboxylate moiety of the carrier protein ThiS. In vitro, sulfur can be provided by H(2)S. The chain is Thiazole synthase from Shewanella denitrificans (strain OS217 / ATCC BAA-1090 / DSM 15013).